A 132-amino-acid chain; its full sequence is UPF0102 protein Acel_1550 (132 aa).

Belongs to the UPF0102 family.

The chain is UPF0102 protein Acel_1550 from Acidothermus cellulolyticus (strain ATCC 43068 / DSM 8971 / 11B).